We begin with the raw amino-acid sequence, 138 residues long: Abscisic stress-ripening protein 5 (138 aa).

Basic residues predominate over residues 1–13; the sequence is MAEEKHHHHLFHH. Disordered regions lie at residues 1–27 and 106–138; these read MAEEKHHHHLFHHKKDDEPATGVDSYG and GAGGYAFHEHHEKKKDHKSAEESTGEKKHHLFG.

The protein belongs to the abscisic acid and water stress-induced protein family.

It is found in the nucleus. Its subcellular location is the cytoplasm. Its function is as follows. Involved in tolerance to aluminum. Regulates the expression of different genes that collectively contribute to the protection of the cell in response to aluminum stress. In Oryza sativa subsp. indica (Rice), this protein is Abscisic stress-ripening protein 5.